The chain runs to 749 residues: MQTSETVSDTGSTVTLQTSVAGQAAVPTQVVQQVPVQQQVQQVQTVQQVQHVYPAQVQYVEGSDTVYTNGAIRTTTYPYTETQMYSQNTGGNYFDTQGGSAQVTTVVSTHSMVGTGGIQMGVTGGQIISSTGGTYLIGNAMENSGHSVSHTTRASPATIEMAIETLQKSDGLSSHRSSLLNSHLQWLLDNYETAEGVSLPRSTLYNHYLRHCQEHKLDPVNAASFGKLIRSIFMGLRTRRLGTRGNSKYHYYGIRVKPDSPLNRLQEDMQYMAMRQQPMQQKQRYKPMQKVDGVGDGFAGSGQSGASVEQTVIAQSQHHQQFLDASRALPEFAEVEISSLPDGTTFEDIKSLQSLYREHCEAILDVVVNLQFSLIEKLWQTFWRYSPSSPADGSTITESGNLSEIESRLPKSKLILFCKNESIVKWMCNCDHMMYQSLVEILIPDVLRPIPSALTQAVRNFAKSLEGWLSSAMSNIPQRMIQTKVAAVSAFAQTLRRYTSLNHLAQAARAVLQNTSQINQMLNDLNRVDFANVQEQASWVCQCDDSMVQRLETDFKMTLQQQSTLEQWAAWLDNVVTQALKPYEGRPSFPKAARQFLLKWSFYSSMVIRDLTLRSAASFGSFHLIRLLYDEYMFYLVEHRVAQATGESPIAVMGEFGDLNDASPGNMEKDEGSDVESEIEEELDDSVEPPAKREKTELSQAFQVGCMQPSLEGSVQQSLVLNQLHSEHIVTSTQTIRQCSATGNTYTAV.

The segment at residues 183–258 is a DNA-binding region (RFX-type winged-helix); it reads HLQWLLDNYE…YHYYGIRVKP (76 aa).

The protein belongs to the RFX family.

The protein resides in the nucleus. Its function is as follows. Transcription factor required for ciliogenesis and islet cell differentiation during endocrine pancreas development. This chain is Transcription factor RFX3 (rfx3), found in Xenopus tropicalis (Western clawed frog).